A 330-amino-acid polypeptide reads, in one-letter code: G-protein coupled bile acid receptor 1 (330 aa).

Topologically, residues 1 to 19 (MTPNSTGEVPGPIPRGALE) are extracellular. N4 carries N-linked (GlcNAc...) asparagine glycosylation. A helical membrane pass occupies residues 20-40 (LSLALASLIIAANLLLALGIA). Over 41 to 50 (CDRRLRSPPA) the chain is Cytoplasmic. Residues 51–71 (GCFFLSLLLAGLLTGLALPTL) traverse the membrane as a helical segment. Residues 72 to 85 (PGLWRQSHRGYWSC) lie on the Extracellular side of the membrane. Cysteines 85 and 155 form a disulfide. A helical membrane pass occupies residues 86–106 (LLVYLAPNFSFLSLLANLLLV). Residues 107-125 (HGERYVAVLRPLQPPGSIR) lie on the Cytoplasmic side of the membrane. Residues 126–146 (LALLLTWTGPLLFASLPALGW) form a helical membrane-spanning segment. The Extracellular segment spans residues 147 to 169 (NHWGPEANCSSQTIFPAPYLYLE). N154 carries N-linked (GlcNAc...) asparagine glycosylation. The chain crosses the membrane as a helical span at residues 170 to 190 (VYGLLLPAVGAAALLSAHVLL). The Cytoplasmic segment spans residues 191–230 (AAHRQLQDIRRLERAVCRDAPSALARALTWRQARAQAGAT). A helical membrane pass occupies residues 231–251 (LLFGLCWGPYVATLFLSVLAY). Residues 252-261 (EQRPPLGPGT) lie on the Extracellular side of the membrane. A helical membrane pass occupies residues 262–282 (LLSLLSLGSASAAAVPVAMGL). The Cytoplasmic segment spans residues 283–330 (GDHRYTAPWRAAARRWLRGLRGRGSQASPGPSTAYHTSSQSSVDVDLN). The disordered stretch occupies residues 304 to 330 (GRGSQASPGPSTAYHTSSQSSVDVDLN). Residues 307 to 330 (SQASPGPSTAYHTSSQSSVDVDLN) are compositionally biased toward polar residues.

It belongs to the G-protein coupled receptor 1 family. As to expression, expressed at high level in spleen. Expressed at lower level in thymus, heart, lung, liver, kidney, ileum, blood and adherent alveolar macrophage cells.

The protein resides in the cell membrane. Its function is as follows. Receptor for bile acid. Bile-acid binding induces its internalization, activation of extracellular signal-regulated kinase and intracellular cAMP production. May be involved in the suppression of macrophage functions by bile acids. Involved in bile acid promoted GLP1R secretion. The sequence is that of G-protein coupled bile acid receptor 1 (GPBAR1) from Oryctolagus cuniculus (Rabbit).